The primary structure comprises 210 residues: MSNNVEEKILHGTTTVGIKATDGVVLCADMRASAGYFIANNNTMKIQRIDDHAGLTLAGGVADAQNIVDVLRYHASLHRIRKQGPIPIKSLARLTSLIFHQNRGYPFMADILMGGFDAVGPALYNIDMFGSVEEKSYVTTGSGSPVAYGTLEEEYRADLTADEAKGVALRAVKAAITRNIGTGDGINVAVINGNGFELLTREQKKAVIAL.

The propeptide at 1–12 (MSNNVEEKILHG) is removed in mature form; by autocatalysis. Catalysis depends on Thr13, which acts as the Nucleophile.

Belongs to the peptidase T1B family. In terms of assembly, the 20S proteasome core is composed of 14 alpha and 14 beta subunits that assemble into four stacked heptameric rings, resulting in a barrel-shaped structure. The two inner rings, each composed of seven catalytic beta subunits, are sandwiched by two outer rings, each composed of seven alpha subunits. The catalytic chamber with the active sites is on the inside of the barrel. Has a gated structure, the ends of the cylinder being occluded by the N-termini of the alpha-subunits. Is capped at one or both ends by the proteasome regulatory ATPase, PAN.

Its subcellular location is the cytoplasm. The enzyme catalyses Cleavage of peptide bonds with very broad specificity.. With respect to regulation, the formation of the proteasomal ATPase PAN-20S proteasome complex, via the docking of the C-termini of PAN into the intersubunit pockets in the alpha-rings, triggers opening of the gate for substrate entry. Interconversion between the open-gate and close-gate conformations leads to a dynamic regulation of the 20S proteasome proteolysis activity. Functionally, component of the proteasome core, a large protease complex with broad specificity involved in protein degradation. The protein is Proteasome subunit beta 2 of Cenarchaeum symbiosum (strain A).